Here is a 736-residue protein sequence, read N- to C-terminus: Peroxisomal multifunctional enzyme type 2 (736 aa).

The interval 1–305 (MGSPLRFDGR…IEVLSKIDSE (305 aa)) is (3R)-hydroxyacyl-CoA dehydrogenase. Residues 13-37 (LVTGAGAGLGRAYALAFAERGALVV), Leu-21, and Asp-40 each bind NAD(+). Lys-46 carries the post-translational modification N6-acetyllysine; alternate. At Lys-46 the chain carries N6-succinyllysine; alternate. At Ser-52 the chain carries Phosphoserine. Residues Lys-57 and Lys-68 each carry the N6-succinyllysine modification. 75-76 (SV) contacts NAD(+). An N6-succinyllysine modification is found at Lys-84. Asn-99 serves as a coordination point for NAD(+). Ser-151 serves as a coordination point for substrate. Tyr-164 (proton acceptor) is an active-site residue. NAD(+) contacts are provided by residues 164–168 (YSAAK) and 196–199 (AGSR). At Thr-265 the chain carries Phosphothreonine. The residue at position 275 (Lys-275) is an N6-succinyllysine. A phosphoserine mark is found at Ser-304 and Ser-309. The enoyl-CoA hydratase 2 stretch occupies residues 322-622 (SGFAGAIGQK…AKTPSEGGKL (301 aa)). The residue at position 356 (Lys-356) is an N6-succinyllysine. 406–407 (HG) lines the (3R)-3-hydroxydecanoyl-CoA pocket. The residue at position 424 (Lys-424) is an N6-succinyllysine. (3R)-3-hydroxydecanoyl-CoA contacts are provided by residues Lys-435, 510 to 515 (DWNPLH), Gly-533, and Phe-563. A MaoC-like domain is found at 484-600 (IPNRPPDAVL…QETGDIVISN (117 aa)). An N6-acetyllysine modification is found at Lys-565. 2 positions are modified to N6-succinyllysine: Lys-579 and Lys-663. In terms of domain architecture, SCP2 spans 624-736 (STFVFEEIGR…QMILKDYAKL (113 aa)). An N6-acetyllysine modification is found at Lys-669. Gln-706 is a substrate binding site. Lys-707 is subject to N6-acetyllysine. Gln-724 is a substrate binding site. Lys-725 carries the post-translational modification N6-succinyllysine. Positions 734–736 (AKL) match the Microbody targeting signal motif.

Belongs to the short-chain dehydrogenases/reductases (SDR) family. As to quaternary structure, homodimer. As to expression, present in many tissues with highest concentrations in liver, heart, prostate and testis.

The protein localises to the peroxisome. The catalysed reaction is a (3R)-3-hydroxyacyl-CoA + NAD(+) = a 3-oxoacyl-CoA + NADH + H(+). The enzyme catalyses a (3R)-3-hydroxyacyl-CoA = a (2E)-enoyl-CoA + H2O. It carries out the reaction (24R,25R)-3alpha,7alpha,12alpha,24-tetrahydroxy-5beta-cholestan-26-oyl-CoA = (24E)-3alpha,7alpha,12alpha-trihydroxy-5beta-cholest-24-en-26-oyl-CoA + H2O. It catalyses the reaction (2E)-octenoyl-CoA + H2O = (3R)-hydroxyoctanoyl-CoA. The catalysed reaction is (3R)-hydroxyoctanoyl-CoA + NAD(+) = 3-oxooctanoyl-CoA + NADH + H(+). The enzyme catalyses (3R)-hydroxyhexadecanoyl-CoA + NAD(+) = 3-oxohexadecanoyl-CoA + NADH + H(+). It carries out the reaction (2E)-hexadecenedioyl-CoA + H2O = (3R)-hydroxyhexadecanedioyl-CoA. It catalyses the reaction (3R)-hydroxyhexadecanedioyl-CoA + NAD(+) = 3-oxohexadecanedioyl-CoA + NADH + H(+). The catalysed reaction is (3R)-hydroxyhexadecanoyl-CoA = (2E)-hexadecenoyl-CoA + H2O. The enzyme catalyses (3R)-3-hydroxydecanoyl-CoA = (2E)-decenoyl-CoA + H2O. It carries out the reaction (3R)-3-hydroxydecanoyl-CoA + NAD(+) = 3-oxodecanoyl-CoA + NADH + H(+). It catalyses the reaction (24R,25R)-3alpha,7alpha,12alpha,24-tetrahydroxy-5beta-cholestan-26-oyl-CoA + NAD(+) = 3alpha,7alpha,12alpha-trihydroxy-24-oxo-5beta-cholestan-26-oyl-CoA + NADH + H(+). It functions in the pathway lipid metabolism; fatty acid beta-oxidation. Functionally, bifunctional enzyme acting on the peroxisomal fatty acid beta-oxidation pathway. Catalyzes two of the four reactions in fatty acid degradation: hydration of 2-enoyl-CoA (trans-2-enoyl-CoA) to produce (3R)-3-hydroxyacyl-CoA, and dehydrogenation of (3R)-3-hydroxyacyl-CoA to produce 3-ketoacyl-CoA (3-oxoacyl-CoA), which is further metabolized by SCPx. Can use straight-chain and branched-chain fatty acids, as well as bile acid intermediates as substrates. The protein is Peroxisomal multifunctional enzyme type 2 of Homo sapiens (Human).